The sequence spans 251 residues: Cobalt transport protein CbiM (251 aa).

The N-terminal stretch at 1–27 (MNKKKNTILIGLYFLVGIMLFPDRIYA) is a signal peptide. The next 6 membrane-spanning stretches (helical) occupy residues 35–55 (LPVKWAGIWWIAMLPFLALGI), 66–86 (GPGIKMLLALAGAFVFVLSSL), 103–123 (LGAILFGPWPMVVLGCIVLIF), 131–151 (GGLTTLGANVFSMAIVGPFVA), 166–186 (WLSVFTGSALGNLLTYITTAT), and 208–228 (VFATTQVPLAVTEGLVTVLIF).

This sequence belongs to the CbiM family. In terms of assembly, forms an energy-coupling factor (ECF) transporter complex composed of an ATP-binding protein (A component, CbiO), a transmembrane protein (T component, CbiQ) and 2 possible substrate-capture proteins (S components, CbiM and CbiN) of unknown stoichimetry.

The protein localises to the cell membrane. Its pathway is cofactor biosynthesis; adenosylcobalamin biosynthesis. Part of the energy-coupling factor (ECF) transporter complex CbiMNOQ involved in cobalt import. This chain is Cobalt transport protein CbiM, found in Acetohalobium arabaticum (strain ATCC 49924 / DSM 5501 / Z-7288).